The following is a 455-amino-acid chain: MLLELLLASVLGFVIYWFVSGDKEESLPLEDGWWGPGSRPVGLEDESIRPFKVETSDEEINDLHQRIDRIRLTPPLENSRFHYGFNSNYLKKILSYWRHEFDWKKQVEILNSYPHFKTKIEGLDIHFIHVKPPQVPPGRTPKPLLMVHGWPGSFFEFYKIIPLLTDPKSHGLSDEHIFEVICPSIPGYGFSQASSKKGFNSVSTARIFYKLMLRLGFQEFYIQGGDWGALVCTNMAQLVPSHVKGLHLNMALILRNHYTLTLLLGRRIGGLLGYTERDMELLYPFKEKVFYSLMRESGYMHIRATKPDTVGCALNDSPVGLAAYILEKFSTWTNSEFRDLEDGGLERKFSLQDLLTNIMIYWTTGSIVSSQRYYKENLGQGFMAHKHERLKVHVPTGFAAFPCEIMHVPEKWVRTKYPQLISYSYMPRGGHFAAFEEPELLARDICKFVGLVERQ.

Residues 1-21 (MLLELLLASVLGFVIYWFVSG) form a helical; Signal-anchor for type III membrane protein membrane-spanning segment. Residues 22-455 (DKEESLPLED…CKFVGLVERQ (434 aa)) lie on the Cytoplasmic side of the membrane. D226 functions as the Nucleophile in the catalytic mechanism. Position 295 is a dimethylated arginine (R295). Residue Y374 is the Proton donor of the active site. The Proton acceptor role is filled by H431.

The protein belongs to the peptidase S33 family.

The protein resides in the microsome membrane. It localises to the endoplasmic reticulum membrane. The catalysed reaction is cis-stilbene oxide + H2O = (1R,2R)-hydrobenzoin. It carries out the reaction 1-(4-methoxyphenyl)-N-methyl-N-[(3-methyloxetan-3-yl)methyl]methanamine + H2O = 2-{[(4-methoxybenzyl)(methyl)amino]methyl}-2-methylpropane-1,3-diol. It catalyses the reaction 8,9-epoxy-(5Z,11Z,14Z)-eicosatrienoate + H2O = 8,9-dihydroxy-(5Z,11Z,14Z)-eicosatrienoate. The enzyme catalyses 11,12-epoxy-(5Z,8Z,14Z)-eicosatrienoate + H2O = 11,12-dihydroxy-(5Z,8Z,14Z)-eicosatrienoate. The catalysed reaction is 2-(5Z,8Z,11Z,14Z-eicosatetraenoyl)-glycerol + H2O = glycerol + (5Z,8Z,11Z,14Z)-eicosatetraenoate + H(+). With respect to regulation, inhibited by 10-hydroxystearamide and methoxy-arachidonyl fluorophosphate. Biotransformation enzyme that catalyzes the hydrolysis of arene and aliphatic epoxides to less reactive and more water soluble dihydrodiols by the trans addition of water. May play a role in the metabolism of endogenous lipids such as epoxide-containing fatty acids. Metabolizes the abundant endocannabinoid 2-arachidonoylglycerol (2-AG) to free arachidonic acid (AA) and glycerol. Binds 20(S)-hydroxycholesterol (20(S)-OHC). This Oryctolagus cuniculus (Rabbit) protein is Epoxide hydrolase 1 (EPHX1).